Consider the following 107-residue polypeptide: U1-lycotoxin-Ls1c (107 aa).

Positions 1–20 are cleaved as a signal peptide; sequence MMKVLVVVALLVTLISYSSS. Residues 21–41 constitute a propeptide that is removed on maturation; it reads EGIDDLEADELLSLMANEQTR. Disulfide bonds link Cys-44/Cys-59, Cys-51/Cys-68, Cys-58/Cys-86, and Cys-70/Cys-84.

Belongs to the neurotoxin 19 (CSTX) family. 04 (U1-Lctx) subfamily. As to expression, expressed by the venom gland.

The protein localises to the secreted. The polypeptide is U1-lycotoxin-Ls1c (Lycosa singoriensis (Wolf spider)).